The chain runs to 175 residues: NADH-ubiquinone oxidoreductase chain 6 (175 aa).

5 helical membrane-spanning segments follow: residues 1 to 21 (MMMY…VGVS), 25 to 45 (SPIY…GVIL), 47 to 67 (FGGS…MLVV), 88 to 108 (VVLG…IYAL), and 149 to 169 (YGVW…VIIM).

It belongs to the complex I subunit 6 family. As to quaternary structure, core subunit of respiratory chain NADH dehydrogenase (Complex I) which is composed of 45 different subunits.

It localises to the mitochondrion inner membrane. It carries out the reaction a ubiquinone + NADH + 5 H(+)(in) = a ubiquinol + NAD(+) + 4 H(+)(out). Functionally, core subunit of the mitochondrial membrane respiratory chain NADH dehydrogenase (Complex I) which catalyzes electron transfer from NADH through the respiratory chain, using ubiquinone as an electron acceptor. Essential for the catalytic activity and assembly of complex I. This Balaenoptera physalus (Fin whale) protein is NADH-ubiquinone oxidoreductase chain 6 (MT-ND6).